Here is a 205-residue protein sequence, read N- to C-terminus: Holliday junction branch migration complex subunit RuvA (205 aa).

Positions 1–65 (MIAKLKGILD…EDRIHLFGFL (65 aa)) are domain I. The tract at residues 66 to 144 (DNTEKVAFNM…NINTIANNTS (79 aa)) is domain II. Residues 145 to 153 (LAILSTDSN) form a flexible linker region. A domain III region spans residues 154 to 205 (THDNILSDAITALIALGISRAEATQILSDIYALFPSISVNELVRTALQRRAK).

It belongs to the RuvA family. In terms of assembly, homotetramer. Forms an RuvA(8)-RuvB(12)-Holliday junction (HJ) complex. HJ DNA is sandwiched between 2 RuvA tetramers; dsDNA enters through RuvA and exits via RuvB. An RuvB hexamer assembles on each DNA strand where it exits the tetramer. Each RuvB hexamer is contacted by two RuvA subunits (via domain III) on 2 adjacent RuvB subunits; this complex drives branch migration. In the full resolvosome a probable DNA-RuvA(4)-RuvB(12)-RuvC(2) complex forms which resolves the HJ.

Its subcellular location is the cytoplasm. Functionally, the RuvA-RuvB-RuvC complex processes Holliday junction (HJ) DNA during genetic recombination and DNA repair, while the RuvA-RuvB complex plays an important role in the rescue of blocked DNA replication forks via replication fork reversal (RFR). RuvA specifically binds to HJ cruciform DNA, conferring on it an open structure. The RuvB hexamer acts as an ATP-dependent pump, pulling dsDNA into and through the RuvAB complex. HJ branch migration allows RuvC to scan DNA until it finds its consensus sequence, where it cleaves and resolves the cruciform DNA. The polypeptide is Holliday junction branch migration complex subunit RuvA (Orientia tsutsugamushi (strain Boryong) (Rickettsia tsutsugamushi)).